The following is a 363-amino-acid chain: Phosphoserine aminotransferase (363 aa).

Residue R42 participates in L-glutamate binding. Residues 76-77 (GR), W102, T156, D175, and Q198 each bind pyridoxal 5'-phosphate. K199 carries the N6-(pyridoxal phosphate)lysine modification. 240-241 (NT) serves as a coordination point for pyridoxal 5'-phosphate.

The protein belongs to the class-V pyridoxal-phosphate-dependent aminotransferase family. SerC subfamily. As to quaternary structure, homodimer. Pyridoxal 5'-phosphate serves as cofactor.

Its subcellular location is the cytoplasm. The enzyme catalyses O-phospho-L-serine + 2-oxoglutarate = 3-phosphooxypyruvate + L-glutamate. It catalyses the reaction 4-(phosphooxy)-L-threonine + 2-oxoglutarate = (R)-3-hydroxy-2-oxo-4-phosphooxybutanoate + L-glutamate. It participates in amino-acid biosynthesis; L-serine biosynthesis; L-serine from 3-phospho-D-glycerate: step 2/3. Its pathway is cofactor biosynthesis; pyridoxine 5'-phosphate biosynthesis; pyridoxine 5'-phosphate from D-erythrose 4-phosphate: step 3/5. Functionally, catalyzes the reversible conversion of 3-phosphohydroxypyruvate to phosphoserine and of 3-hydroxy-2-oxo-4-phosphonooxybutanoate to phosphohydroxythreonine. This is Phosphoserine aminotransferase from Shewanella frigidimarina (strain NCIMB 400).